Here is a 447-residue protein sequence, read N- to C-terminus: T-DNA border endonuclease VirD2 (447 aa).

2 disordered regions span residues 214–265 and 300–447; these read ADLE…QEPA and SGSS…GNRR. Over residues 251–260 the composition is skewed to polar residues; sequence NNRQNESQVH. Residues 390–406 are compositionally biased toward low complexity; sequence TATTRASTATDSLSATA. Basic and acidic residues predominate over residues 427-447; that stretch reads PSERKRERDERSKDGRGGNRR.

Its function is as follows. Tumor formation by A.tumefaciens involves the transfer and integration of a defined segment (T-DNA) of Ti plasmid DNA into the plant nuclear genome. The virD operon encodes a site-specific endonuclease that cleaves at a unique site within both 24 bp direct repeats flanking the T-DNA. This Agrobacterium fabrum (strain C58 / ATCC 33970) (Agrobacterium tumefaciens (strain C58)) protein is T-DNA border endonuclease VirD2 (virD2).